Reading from the N-terminus, the 482-residue chain is Aspartyl/glutamyl-tRNA(Asn/Gln) amidotransferase subunit B (482 aa).

Belongs to the GatB/GatE family. GatB subfamily. In terms of assembly, heterotrimer of A, B and C subunits.

It carries out the reaction L-glutamyl-tRNA(Gln) + L-glutamine + ATP + H2O = L-glutaminyl-tRNA(Gln) + L-glutamate + ADP + phosphate + H(+). The catalysed reaction is L-aspartyl-tRNA(Asn) + L-glutamine + ATP + H2O = L-asparaginyl-tRNA(Asn) + L-glutamate + ADP + phosphate + 2 H(+). Allows the formation of correctly charged Asn-tRNA(Asn) or Gln-tRNA(Gln) through the transamidation of misacylated Asp-tRNA(Asn) or Glu-tRNA(Gln) in organisms which lack either or both of asparaginyl-tRNA or glutaminyl-tRNA synthetases. The reaction takes place in the presence of glutamine and ATP through an activated phospho-Asp-tRNA(Asn) or phospho-Glu-tRNA(Gln). The polypeptide is Aspartyl/glutamyl-tRNA(Asn/Gln) amidotransferase subunit B (Ehrlichia canis (strain Jake)).